A 482-amino-acid polypeptide reads, in one-letter code: tRNA sulfurtransferase (482 aa).

The THUMP domain occupies 61-165 (LTIRDALTRI…DDRLLLIKGR (105 aa)). ATP-binding positions include 183–184 (LI), lysine 265, glycine 287, and glutamine 296. A disulfide bond links cysteine 344 and cysteine 456. In terms of domain architecture, Rhodanese spans 404–482 (FGPNDVILDI…GFKNVKVYRP (79 aa)). Cysteine 456 acts as the Cysteine persulfide intermediate in catalysis.

It belongs to the ThiI family. In terms of assembly, interacts with IscS.

Its subcellular location is the cytoplasm. The enzyme catalyses [ThiI sulfur-carrier protein]-S-sulfanyl-L-cysteine + a uridine in tRNA + 2 reduced [2Fe-2S]-[ferredoxin] + ATP + H(+) = [ThiI sulfur-carrier protein]-L-cysteine + a 4-thiouridine in tRNA + 2 oxidized [2Fe-2S]-[ferredoxin] + AMP + diphosphate. It carries out the reaction [ThiS sulfur-carrier protein]-C-terminal Gly-Gly-AMP + S-sulfanyl-L-cysteinyl-[cysteine desulfurase] + AH2 = [ThiS sulfur-carrier protein]-C-terminal-Gly-aminoethanethioate + L-cysteinyl-[cysteine desulfurase] + A + AMP + 2 H(+). Its pathway is cofactor biosynthesis; thiamine diphosphate biosynthesis. In terms of biological role, catalyzes the ATP-dependent transfer of a sulfur to tRNA to produce 4-thiouridine in position 8 of tRNAs, which functions as a near-UV photosensor. Also catalyzes the transfer of sulfur to the sulfur carrier protein ThiS, forming ThiS-thiocarboxylate. This is a step in the synthesis of thiazole, in the thiamine biosynthesis pathway. The sulfur is donated as persulfide by IscS. The polypeptide is tRNA sulfurtransferase (Escherichia coli O157:H7).